The following is a 504-amino-acid chain: 2-methylcitrate dehydratase 2 (504 aa).

The protein belongs to the PrpD family. Monomer.

It catalyses the reaction (2S,3S)-2-methylcitrate = 2-methyl-cis-aconitate + H2O. It carries out the reaction citrate = D-threo-isocitrate. It participates in organic acid metabolism; propanoate degradation. Its pathway is carbohydrate metabolism; tricarboxylic acid cycle; isocitrate from oxaloacetate: step 1/2. Involved in the catabolism of short chain fatty acids (SCFA) via the 2-methylcitrate cycle I (propionate degradation route). Catalyzes the dehydration of 2-methylcitrate (2-MC) to yield the cis isomer 2-methyl-aconitate. Could also catalyze the dehydration of citrate and the hydration of cis-aconitate. This is 2-methylcitrate dehydratase 2 (prpD2) from Corynebacterium glutamicum (strain ATCC 13032 / DSM 20300 / JCM 1318 / BCRC 11384 / CCUG 27702 / LMG 3730 / NBRC 12168 / NCIMB 10025 / NRRL B-2784 / 534).